Reading from the N-terminus, the 366-residue chain is Glycerol-3-phosphate dehydrogenase [NAD(+)], glycosomal (366 aa).

NAD(+) contacts are provided by residues 22-27 (GSGAFG), Phe97, Lys125, and Ala157. Substrate is bound at residue Lys125. Lys210 acts as the Proton acceptor in catalysis. Residues Arg274, Val298, and Glu300 each contribute to the NAD(+) site. A substrate-binding site is contributed by 274–275 (RN). Positions 364-366 (SKL) match the Microbody targeting signal motif.

The protein belongs to the NAD-dependent glycerol-3-phosphate dehydrogenase family. As to quaternary structure, homodimer.

The protein resides in the glycosome. It carries out the reaction sn-glycerol 3-phosphate + NAD(+) = dihydroxyacetone phosphate + NADH + H(+). This chain is Glycerol-3-phosphate dehydrogenase [NAD(+)], glycosomal (GPD), found in Leishmania mexicana.